The sequence spans 200 residues: Glycerol-3-phosphate acyltransferase (200 aa).

4 consecutive transmembrane segments (helical) span residues alanine 4–glycine 24, alanine 70–isoleucine 90, leucine 110–leucine 130, and glutamine 158–arginine 178.

The protein belongs to the PlsY family. Probably interacts with PlsX.

The protein resides in the cell inner membrane. It catalyses the reaction an acyl phosphate + sn-glycerol 3-phosphate = a 1-acyl-sn-glycero-3-phosphate + phosphate. It functions in the pathway lipid metabolism; phospholipid metabolism. Functionally, catalyzes the transfer of an acyl group from acyl-phosphate (acyl-PO(4)) to glycerol-3-phosphate (G3P) to form lysophosphatidic acid (LPA). This enzyme utilizes acyl-phosphate as fatty acyl donor, but not acyl-CoA or acyl-ACP. The polypeptide is Glycerol-3-phosphate acyltransferase (Synechococcus sp. (strain JA-2-3B'a(2-13)) (Cyanobacteria bacterium Yellowstone B-Prime)).